We begin with the raw amino-acid sequence, 91 residues long: uncharacterized protein (91 aa).

2 helical membrane-spanning segments follow: residues 10–30 (VLFTAPGLIVGALAIGAAGGI) and 46–66 (LLVAVLFVGAFTGIMVEQALS). A disordered region spans residues 68–91 (MRRQDGARGTARAGRNSARRRMPS).

The protein resides in the cell membrane. This is an uncharacterized protein from Sinorhizobium fredii (strain NBRC 101917 / NGR234).